A 230-amino-acid polypeptide reads, in one-letter code: Endonuclease NucS (230 aa).

This sequence belongs to the NucS endonuclease family.

It is found in the cytoplasm. Its function is as follows. Cleaves both 3' and 5' ssDNA extremities of branched DNA structures. The protein is Endonuclease NucS of Corynebacterium glutamicum (strain ATCC 13032 / DSM 20300 / JCM 1318 / BCRC 11384 / CCUG 27702 / LMG 3730 / NBRC 12168 / NCIMB 10025 / NRRL B-2784 / 534).